Reading from the N-terminus, the 1008-residue chain is ATP-dependent zinc metalloprotease FTSH 12, chloroplastic (1008 aa).

Residues 1–49 (MEIAISYKPNPLISSSTQLLKRSKSFGLVRFPAKYGLGATRKKQLFRVY) constitute a chloroplast transit peptide. 2 consecutive transmembrane segments (helical) span residues 154 to 174 (AALF…YVAI) and 427 to 447 (IHYF…LWFI). 533 to 540 (GPPGTGKT) provides a ligand contact to ATP. H769 serves as a coordination point for Zn(2+). Residue E770 is part of the active site. Positions 773 and 849 each coordinate Zn(2+).

This sequence in the N-terminal section; belongs to the AAA ATPase family. It in the C-terminal section; belongs to the peptidase M41 family. The cofactor is Zn(2+).

It is found in the plastid. It localises to the chloroplast thylakoid membrane. Its function is as follows. Probable ATP-dependent zinc metallopeptidase. This is ATP-dependent zinc metalloprotease FTSH 12, chloroplastic (FTSH12) from Arabidopsis thaliana (Mouse-ear cress).